A 152-amino-acid chain; its full sequence is Transcriptional regulator MraZ (152 aa).

2 SpoVT-AbrB domains span residues 5–52 (ASAV…PLNQ) and 81–124 (ATEC…SESE).

Belongs to the MraZ family. Forms oligomers.

The protein localises to the cytoplasm. Its subcellular location is the nucleoid. This chain is Transcriptional regulator MraZ, found in Histophilus somni (strain 2336) (Haemophilus somnus).